The sequence spans 93 residues: uncharacterized protein (93 aa).

Residues 36-69 adopt a coiled-coil conformation; it reads SEERLLSRLFEEMDELREAVEKEDWENLRDELLD.

This is an uncharacterized protein from Archaeoglobus fulgidus (strain ATCC 49558 / DSM 4304 / JCM 9628 / NBRC 100126 / VC-16).